Consider the following 512-residue polypeptide: UDP-N-acetylmuramate--L-alanine ligase (512 aa).

132 to 138 (GAHGKTT) contacts ATP.

Belongs to the MurCDEF family.

Its subcellular location is the cytoplasm. The enzyme catalyses UDP-N-acetyl-alpha-D-muramate + L-alanine + ATP = UDP-N-acetyl-alpha-D-muramoyl-L-alanine + ADP + phosphate + H(+). The protein operates within cell wall biogenesis; peptidoglycan biosynthesis. Cell wall formation. The sequence is that of UDP-N-acetylmuramate--L-alanine ligase from Bifidobacterium longum (strain DJO10A).